Consider the following 297-residue polypeptide: Transmembrane protein 169 (297 aa).

Residues Met-1–Gly-88 form a disordered region. The Extracellular portion of the chain corresponds to Met-1–His-159. Positions Arg-22 to Leu-31 are enriched in low complexity. Composition is skewed to acidic residues over residues Lys-61–Glu-70 and Glu-78–Gly-88. The chain crosses the membrane as a helical span at residues Val-160–Phe-180. Residues Tyr-181–Leu-210 are Cytoplasmic-facing. Residues Ile-211 to Val-231 traverse the membrane as a helical segment. The Extracellular segment spans residues Ala-232–Val-297.

Its subcellular location is the membrane. The sequence is that of Transmembrane protein 169 (Tmem169) from Mus musculus (Mouse).